A 228-amino-acid polypeptide reads, in one-letter code: Ribose-5-phosphate isomerase A (228 aa).

Substrate contacts are provided by residues 32–35 (TGST), 85–88 (DGAD), and 98–101 (KGGG). Glu107 (proton acceptor) is an active-site residue. Lys125 is a binding site for substrate.

It belongs to the ribose 5-phosphate isomerase family. As to quaternary structure, homodimer.

The enzyme catalyses aldehydo-D-ribose 5-phosphate = D-ribulose 5-phosphate. It functions in the pathway carbohydrate degradation; pentose phosphate pathway; D-ribose 5-phosphate from D-ribulose 5-phosphate (non-oxidative stage): step 1/1. Functionally, catalyzes the reversible conversion of ribose-5-phosphate to ribulose 5-phosphate. The chain is Ribose-5-phosphate isomerase A from Ralstonia nicotianae (strain ATCC BAA-1114 / GMI1000) (Ralstonia solanacearum).